The following is a 160-amino-acid chain: MSVTKKPDLTDPVLRAKLAKGMGHNYYGEPAWPNDLLYMFPVVILGTLSCITGLAVLDPAAIGEPANPFATPLEILPEWYFFPVFQLLRTVPNKLLGVLLMAAVPAGLLTVPFIESINKFQNPFRRPVATTVFLIGTVVAIWLGIGATLPIDISLTLGLF.

Helical transmembrane passes span 36-56, 95-115, and 131-151; these read LLYM…GLAV, LLGV…PFIE, and TVFL…TLPI.

This sequence belongs to the cytochrome b family. PetD subfamily. The 4 large subunits of the cytochrome b6-f complex are cytochrome b6, subunit IV (17 kDa polypeptide, petD), cytochrome f and the Rieske protein, while the 4 small subunits are petG, petL, petM and petN. The complex functions as a dimer.

It is found in the plastid. Its subcellular location is the chloroplast thylakoid membrane. Component of the cytochrome b6-f complex, which mediates electron transfer between photosystem II (PSII) and photosystem I (PSI), cyclic electron flow around PSI, and state transitions. In Nephroselmis olivacea (Green alga), this protein is Cytochrome b6-f complex subunit 4.